The chain runs to 181 residues: Ribosome maturation factor RimP (181 aa).

The protein belongs to the RimP family.

It is found in the cytoplasm. Its function is as follows. Required for maturation of 30S ribosomal subunits. This is Ribosome maturation factor RimP from Sphingopyxis alaskensis (strain DSM 13593 / LMG 18877 / RB2256) (Sphingomonas alaskensis).